A 103-amino-acid chain; its full sequence is Large ribosomal subunit protein eL21 (103 aa).

This sequence belongs to the eukaryotic ribosomal protein eL21 family.

This is Large ribosomal subunit protein eL21 from Sulfolobus acidocaldarius (strain ATCC 33909 / DSM 639 / JCM 8929 / NBRC 15157 / NCIMB 11770).